We begin with the raw amino-acid sequence, 118 residues long: Aspartate 1-decarboxylase 1 (118 aa).

Residue Ser25 is the Schiff-base intermediate with substrate; via pyruvic acid of the active site. Ser25 carries the post-translational modification Pyruvic acid (Ser). Residue Thr57 participates in substrate binding. Tyr58 serves as the catalytic Proton donor. 73-75 (GAA) contributes to the substrate binding site.

It belongs to the PanD family. In terms of assembly, heterooctamer of four alpha and four beta subunits. The cofactor is pyruvate. Is synthesized initially as an inactive proenzyme, which is activated by self-cleavage at a specific serine bond to produce a beta-subunit with a hydroxyl group at its C-terminus and an alpha-subunit with a pyruvoyl group at its N-terminus.

The protein localises to the cytoplasm. The catalysed reaction is L-aspartate + H(+) = beta-alanine + CO2. The protein operates within cofactor biosynthesis; (R)-pantothenate biosynthesis; beta-alanine from L-aspartate: step 1/1. In terms of biological role, catalyzes the pyruvoyl-dependent decarboxylation of aspartate to produce beta-alanine. The chain is Aspartate 1-decarboxylase 1 from Gloeobacter violaceus (strain ATCC 29082 / PCC 7421).